A 369-amino-acid chain; its full sequence is Glutamate 5-kinase (369 aa).

Lys-9 serves as a coordination point for ATP. Residues Ser-49, Asp-136, and Asn-148 each coordinate substrate. Residues Thr-168–Asp-169 and Thr-210–Lys-216 contribute to the ATP site. One can recognise a PUA domain in the interval Gln-275–Trp-355.

Belongs to the glutamate 5-kinase family.

It is found in the cytoplasm. The catalysed reaction is L-glutamate + ATP = L-glutamyl 5-phosphate + ADP. The protein operates within amino-acid biosynthesis; L-proline biosynthesis; L-glutamate 5-semialdehyde from L-glutamate: step 1/2. Functionally, catalyzes the transfer of a phosphate group to glutamate to form L-glutamate 5-phosphate. This is Glutamate 5-kinase from Streptococcus pneumoniae serotype 4 (strain ATCC BAA-334 / TIGR4).